We begin with the raw amino-acid sequence, 250 residues long: Imidazole glycerol phosphate synthase subunit HisF (250 aa).

Residues aspartate 11 and aspartate 130 contribute to the active site.

This sequence belongs to the HisA/HisF family. In terms of assembly, heterodimer of HisH and HisF.

The protein localises to the cytoplasm. It catalyses the reaction 5-[(5-phospho-1-deoxy-D-ribulos-1-ylimino)methylamino]-1-(5-phospho-beta-D-ribosyl)imidazole-4-carboxamide + L-glutamine = D-erythro-1-(imidazol-4-yl)glycerol 3-phosphate + 5-amino-1-(5-phospho-beta-D-ribosyl)imidazole-4-carboxamide + L-glutamate + H(+). Its pathway is amino-acid biosynthesis; L-histidine biosynthesis; L-histidine from 5-phospho-alpha-D-ribose 1-diphosphate: step 5/9. Functionally, IGPS catalyzes the conversion of PRFAR and glutamine to IGP, AICAR and glutamate. The HisF subunit catalyzes the cyclization activity that produces IGP and AICAR from PRFAR using the ammonia provided by the HisH subunit. The protein is Imidazole glycerol phosphate synthase subunit HisF of Bacteroides fragilis (strain ATCC 25285 / DSM 2151 / CCUG 4856 / JCM 11019 / LMG 10263 / NCTC 9343 / Onslow / VPI 2553 / EN-2).